A 732-amino-acid polypeptide reads, in one-letter code: MGRREEMIAKIKELMTQPERIRNMGIAAHIDHGKTTLSDNLLAGAGMISEELAGKQLVLDFDEQEQARGITINAANVSMVHNYEGQDYLINLIDTPGHVDFGGDVTRAMRAIDGAIIVVDAVEGVMPQTETVLRQALREYVKPVLFINKVDRLIKELKLGPNEILQRFAKIITDVNRLIKRYAPEEFKSQWMVKVEDGSVAFGSAYYNWALSVPFMKKTGVSFKDIVELTNKGDLKGLRQKAPLHVVVLDMVVRHLPNPLEAQKYRIPHLWRGDINSDVGQAMLKCDPKGKMVMVVTKIILDKHAGEVATGRVWSGTVKTGQEVYLINSKRKARIQQVGIYMGPERINMEAVPAGNIVAVTGLRDAMAGETVSVEKIEPFEALHYTSEPVVTVAIEAKNVKDLPKLIEALRQLAKEDPTLHVKIDEETGQHLLSGMGELHLEVKLYRLKTEWKLDVDVSPPIVVYRESVTKKSPIVEGKSPNKHNRFYITVEPMPDEIYEAIREGIIPEGRPKNPKEVAKKLAELGMDYELAKGIVDVYNGNMFFDNTKGIQYLNEVMDLLVDGFHMAMDEGPLAKEPVMKVIVRLHDAKIHEDNVHRGPAQIYPAIRTAIHCAMMKAGPVLYEPYQKVIINIPYEYMGAVSRELNQRRGQLIDMRQEGEVMIIIGEAPVAEMFGFAGAIRGATSGKALWTTEHAGFKRVPNELAQQIIRQIRQRKGLDPNPPTEKDVCPQQ.

Residues 19 to 230 (ERIRNMGIAA…VSFKDIVELT (212 aa)) enclose the tr-type G domain. GTP-binding positions include 28-35 (AHIDHGKT), 94-98 (DTPGH), and 148-151 (NKVD). Histidine 597 bears the Diphthamide mark.

The protein belongs to the TRAFAC class translation factor GTPase superfamily. Classic translation factor GTPase family. EF-G/EF-2 subfamily.

It is found in the cytoplasm. In terms of biological role, catalyzes the GTP-dependent ribosomal translocation step during translation elongation. During this step, the ribosome changes from the pre-translocational (PRE) to the post-translocational (POST) state as the newly formed A-site-bound peptidyl-tRNA and P-site-bound deacylated tRNA move to the P and E sites, respectively. Catalyzes the coordinated movement of the two tRNA molecules, the mRNA and conformational changes in the ribosome. This is Elongation factor 2 from Thermococcus gammatolerans (strain DSM 15229 / JCM 11827 / EJ3).